Here is a 229-residue protein sequence, read N- to C-terminus: Protein-L-isoaspartate O-methyltransferase (229 aa).

The active site involves serine 65.

Belongs to the methyltransferase superfamily. L-isoaspartyl/D-aspartyl protein methyltransferase family.

It localises to the cytoplasm. The enzyme catalyses [protein]-L-isoaspartate + S-adenosyl-L-methionine = [protein]-L-isoaspartate alpha-methyl ester + S-adenosyl-L-homocysteine. In terms of biological role, catalyzes the methyl esterification of L-isoaspartyl residues in peptides and proteins that result from spontaneous decomposition of normal L-aspartyl and L-asparaginyl residues. It plays a role in the repair and/or degradation of damaged proteins. This chain is Protein-L-isoaspartate O-methyltransferase, found in Chlorobium phaeovibrioides (strain DSM 265 / 1930) (Prosthecochloris vibrioformis (strain DSM 265)).